The sequence spans 94 residues: Exodeoxyribonuclease 7 small subunit (94 aa).

Belongs to the XseB family. As to quaternary structure, heterooligomer composed of large and small subunits.

The protein resides in the cytoplasm. It catalyses the reaction Exonucleolytic cleavage in either 5'- to 3'- or 3'- to 5'-direction to yield nucleoside 5'-phosphates.. In terms of biological role, bidirectionally degrades single-stranded DNA into large acid-insoluble oligonucleotides, which are then degraded further into small acid-soluble oligonucleotides. The sequence is that of Exodeoxyribonuclease 7 small subunit from Trichormus variabilis (strain ATCC 29413 / PCC 7937) (Anabaena variabilis).